A 373-amino-acid chain; its full sequence is ATP-dependent 6-phosphofructokinase (373 aa).

Residues Gly12, 74 to 75, and 110 to 113 contribute to the ATP site; these read RD and GGGT. Substrate is bound by residues 133 to 135, Arg170, 177 to 179, Glu230, Arg291, and 297 to 300; these read TID, MGH, and YVQR. Asp135 serves as the catalytic Proton acceptor.

This sequence belongs to the phosphofructokinase type A (PFKA) family. Mixed-substrate PFK group III subfamily. As to quaternary structure, homodimer or homotetramer. Mg(2+) is required as a cofactor.

It is found in the cytoplasm. It catalyses the reaction beta-D-fructose 6-phosphate + ATP = beta-D-fructose 1,6-bisphosphate + ADP + H(+). It functions in the pathway carbohydrate degradation; glycolysis; D-glyceraldehyde 3-phosphate and glycerone phosphate from D-glucose: step 3/4. Catalyzes the phosphorylation of D-fructose 6-phosphate to fructose 1,6-bisphosphate by ATP, the first committing step of glycolysis. The chain is ATP-dependent 6-phosphofructokinase from Propionibacterium freudenreichii subsp. shermanii (strain ATCC 9614 / DSM 4902 / CIP 103027 / NCIMB 8099 / CIRM-BIA1).